The following is a 482-amino-acid chain: tRNA sulfurtransferase (482 aa).

Positions 61–165 (AEVLEILTHT…GDKLNQVLAR (105 aa)) constitute a THUMP domain. ATP-binding positions include 183–184 (LI), Lys265, Gly287, and Gln296. Cys344 and Cys456 are disulfide-bonded. Residues 404-482 (VEEHAVVLDI…GFNNVKVYRP (79 aa)) form the Rhodanese domain. Cys456 serves as the catalytic Cysteine persulfide intermediate.

It belongs to the ThiI family.

It is found in the cytoplasm. The catalysed reaction is [ThiI sulfur-carrier protein]-S-sulfanyl-L-cysteine + a uridine in tRNA + 2 reduced [2Fe-2S]-[ferredoxin] + ATP + H(+) = [ThiI sulfur-carrier protein]-L-cysteine + a 4-thiouridine in tRNA + 2 oxidized [2Fe-2S]-[ferredoxin] + AMP + diphosphate. It catalyses the reaction [ThiS sulfur-carrier protein]-C-terminal Gly-Gly-AMP + S-sulfanyl-L-cysteinyl-[cysteine desulfurase] + AH2 = [ThiS sulfur-carrier protein]-C-terminal-Gly-aminoethanethioate + L-cysteinyl-[cysteine desulfurase] + A + AMP + 2 H(+). It functions in the pathway cofactor biosynthesis; thiamine diphosphate biosynthesis. In terms of biological role, catalyzes the ATP-dependent transfer of a sulfur to tRNA to produce 4-thiouridine in position 8 of tRNAs, which functions as a near-UV photosensor. Also catalyzes the transfer of sulfur to the sulfur carrier protein ThiS, forming ThiS-thiocarboxylate. This is a step in the synthesis of thiazole, in the thiamine biosynthesis pathway. The sulfur is donated as persulfide by IscS. This chain is tRNA sulfurtransferase, found in Vibrio parahaemolyticus serotype O3:K6 (strain RIMD 2210633).